Here is a 204-residue protein sequence, read N- to C-terminus: Putative t-SNARE coiled-coil homology domain-containing protein L657 (204 aa).

2 t-SNARE coiled-coil homology domains span residues 9–71 and 140–202; these read SDYY…MDHV and DNSR…IKHT. Residues 159-181 adopt a coiled-coil conformation; the sequence is VLEKQANDISNILDEQNNTLEII.

The sequence is that of Putative t-SNARE coiled-coil homology domain-containing protein L657 from Acanthamoeba polyphaga (Amoeba).